The sequence spans 221 residues: 7-cyano-7-deazaguanine synthase (221 aa).

12–22 (FSGGQDSTTCL) contacts ATP. Residues Cys190, Cys199, Cys202, and Cys205 each contribute to the Zn(2+) site.

The protein belongs to the QueC family. In terms of assembly, homodimer. Zn(2+) serves as cofactor.

It carries out the reaction 7-carboxy-7-deazaguanine + NH4(+) + ATP = 7-cyano-7-deazaguanine + ADP + phosphate + H2O + H(+). The protein operates within purine metabolism; 7-cyano-7-deazaguanine biosynthesis. Functionally, catalyzes the ATP-dependent conversion of 7-carboxy-7-deazaguanine (CDG) to 7-cyano-7-deazaguanine (preQ(0)). In Clostridium novyi (strain NT), this protein is 7-cyano-7-deazaguanine synthase.